Here is a 231-residue protein sequence, read N- to C-terminus: Large ribosomal subunit protein uL1 (231 aa).

It belongs to the universal ribosomal protein uL1 family. In terms of assembly, part of the 50S ribosomal subunit.

In terms of biological role, binds directly to 23S rRNA. The L1 stalk is quite mobile in the ribosome, and is involved in E site tRNA release. Protein L1 is also a translational repressor protein, it controls the translation of the L11 operon by binding to its mRNA. This is Large ribosomal subunit protein uL1 from Ralstonia pickettii (strain 12J).